A 203-amino-acid chain; its full sequence is Small ribosomal subunit protein uS4 (203 aa).

Positions 93-156 constitute an S4 RNA-binding domain; sequence RRLDNVVYRL…MKVPAILEAV (64 aa).

This sequence belongs to the universal ribosomal protein uS4 family. Part of the 30S ribosomal subunit. Contacts protein S5. The interaction surface between S4 and S5 is involved in control of translational fidelity.

One of the primary rRNA binding proteins, it binds directly to 16S rRNA where it nucleates assembly of the body of the 30S subunit. In terms of biological role, with S5 and S12 plays an important role in translational accuracy. The polypeptide is Small ribosomal subunit protein uS4 (Streptococcus equi subsp. equi (strain 4047)).